Here is a 115-residue protein sequence, read N- to C-terminus: T cell receptor delta variable 2 (115 aa).

Positions 1–19 (MQRISSLIHLSLFWAGVMS) are cleaved as a signal peptide. One can recognise an Ig-like domain in the interval 25–115 (PEHQTVPVSI…EGSYYCACDT (91 aa)). Cysteines 42 and 111 form a disulfide.

Gamma-delta TR is a heterodimer composed of a gamma and delta chain; disulfide-linked. The gamma-delta TR is associated with the transmembrane signaling CD3 coreceptor proteins following the stoichiometry: a single gamma-delta TR heterodimer associates with one CD3D-CD3E heterodimer, one CD3G-CD3E heterodimer and one CD247 homodimer forming a stable octameric structure. Upon activation, gamma-delta TR complex associates with FCER1G to initiate intracellular signaling.

Its subcellular location is the cell membrane. In terms of biological role, v region of the variable domain of T cell receptor (TR) delta chain that participates in the antigen recognition. Gamma-delta TRs recognize a variety of self and foreign non-peptide antigens frequently expressed at the epithelial boundaries between the host and external environment, including endogenous lipids presented by MH-like protein CD1D and phosphoantigens presented by butyrophilin-like molecule BTN3A1. Upon antigen recognition induces rapid, innate-like immune responses involved in pathogen clearance and tissue repair. Binding of gamma-delta TR complex to antigen triggers phosphorylation of immunoreceptor tyrosine-based activation motifs (ITAMs) in the CD3 chains by the LCK and FYN kinases, allowing the recruitment, phosphorylation, and activation of ZAP70 that facilitates phosphorylation of the scaffolding proteins LCP2 and LAT. This lead to the formation of a supramolecular signalosome that recruits the phospholipase PLCG1, resulting in calcium mobilization and ERK activation, ultimately leading to T cell expansion and differentiation into effector cells. Gamma-delta TRs are produced through somatic rearrangement of a limited repertoire of variable (V), diversity (D), and joining (J) genes. The potential diversity of gamma-delta TRs is conferred by the unique ability to rearrange (D) genes in tandem and to utilize all three reading frames. The combinatorial diversity is considerably increased by the sequence exonuclease trimming and random nucleotide (N) region additions which occur during the V-(D)-J rearrangements. The chain is T cell receptor delta variable 2 from Homo sapiens (Human).